The primary structure comprises 40 residues: Photosystem II reaction center protein J (40 aa).

A helical membrane pass occupies residues 8-28 (IPLWLIGTVAGIPVIGLVGVF).

The protein belongs to the PsbJ family. In terms of assembly, PSII is composed of 1 copy each of membrane proteins PsbA, PsbB, PsbC, PsbD, PsbE, PsbF, PsbH, PsbI, PsbJ, PsbK, PsbL, PsbM, PsbT, PsbX, PsbY, PsbZ, Psb30/Ycf12, at least 3 peripheral proteins of the oxygen-evolving complex and a large number of cofactors. It forms dimeric complexes.

The protein localises to the plastid. It is found in the chloroplast thylakoid membrane. Functionally, one of the components of the core complex of photosystem II (PSII). PSII is a light-driven water:plastoquinone oxidoreductase that uses light energy to abstract electrons from H(2)O, generating O(2) and a proton gradient subsequently used for ATP formation. It consists of a core antenna complex that captures photons, and an electron transfer chain that converts photonic excitation into a charge separation. This chain is Photosystem II reaction center protein J, found in Hordeum jubatum (Foxtail barley).